The sequence spans 328 residues: Arylacetonitrilase (328 aa).

In terms of domain architecture, CN hydrolase spans 5 to 278 (VRVAVTQAEP…EGIIYADLDF (274 aa)). Catalysis depends on Glu-45, which acts as the Proton acceptor. Lys-125 is an active-site residue. Cys-160 functions as the Nucleophile in the catalytic mechanism.

The protein belongs to the carbon-nitrogen hydrolase superfamily. Nitrilase family.

It catalyses the reaction a nitrile + 2 H2O = a carboxylate + NH4(+). The catalysed reaction is 4-chlorophenylacetonitrile + 2 H2O = 4-chlorophenylacetate + NH4(+). Its function is as follows. Nitrilase that hydrolyzes preferentially phenylacetonitrile, (R,S)-mandelonitrile, and 3-indolylacetonitrile. The polypeptide is Arylacetonitrilase (Aspergillus niger (strain ATCC MYA-4892 / CBS 513.88 / FGSC A1513)).